The sequence spans 111 residues: NADH-ubiquinone oxidoreductase chain 4 (111 aa).

Residues 35-55 (LITSLFSWLDITVFLTGLSAF) form a helical membrane-spanning segment.

The protein belongs to the complex I subunit 4 family.

The protein resides in the mitochondrion membrane. It catalyses the reaction a ubiquinone + NADH + 5 H(+)(in) = a ubiquinol + NAD(+) + 4 H(+)(out). Its function is as follows. Core subunit of the mitochondrial membrane respiratory chain NADH dehydrogenase (Complex I) that is believed to belong to the minimal assembly required for catalysis. Complex I functions in the transfer of electrons from NADH to the respiratory chain. The immediate electron acceptor for the enzyme is believed to be ubiquinone. In Caiman crocodilus (Spectacled caiman), this protein is NADH-ubiquinone oxidoreductase chain 4 (MT-ND4).